Reading from the N-terminus, the 563-residue chain is F-box/kelch-repeat protein At5g42350 (563 aa).

Residues 129 to 175 (YRKHVYLPDDILEMCLMRLPLTSLLNAHLVCKKWQSMANTQRFLQMR) enclose the F-box domain. 3 Kelch repeats span residues 184 to 231 (WLFL…SIHE), 232 to 282 (EIYI…ATEV), and 355 to 402 (VLIA…IICN).

This Arabidopsis thaliana (Mouse-ear cress) protein is F-box/kelch-repeat protein At5g42350.